Consider the following 338-residue polypeptide: Aspartate carbamoyltransferase catalytic subunit (338 aa).

Carbamoyl phosphate-binding residues include Arg57 and Thr58. Residue Lys86 coordinates L-aspartate. Carbamoyl phosphate-binding residues include Arg107, His135, and Gln138. L-aspartate-binding residues include Arg172 and Arg234. Residues Leu274 and Pro275 each contribute to the carbamoyl phosphate site.

This sequence belongs to the aspartate/ornithine carbamoyltransferase superfamily. ATCase family. As to quaternary structure, heterododecamer (2C3:3R2) of six catalytic PyrB chains organized as two trimers (C3), and six regulatory PyrI chains organized as three dimers (R2).

The enzyme catalyses carbamoyl phosphate + L-aspartate = N-carbamoyl-L-aspartate + phosphate + H(+). The protein operates within pyrimidine metabolism; UMP biosynthesis via de novo pathway; (S)-dihydroorotate from bicarbonate: step 2/3. Functionally, catalyzes the condensation of carbamoyl phosphate and aspartate to form carbamoyl aspartate and inorganic phosphate, the committed step in the de novo pyrimidine nucleotide biosynthesis pathway. The chain is Aspartate carbamoyltransferase catalytic subunit from Cellvibrio japonicus (strain Ueda107) (Pseudomonas fluorescens subsp. cellulosa).